The primary structure comprises 148 residues: MSSFNDYFEIQNVENLLPTLKLCKQYFFKNKQDSIVNNNNYNNNNKNNNNNNNNNNNNNNNNNNNNNNNYINSCNSNNNNNNNNNNTKNNNINSRTDKNNNGDNKFNFINEIVNNNISTYTPYNILNSCHGSSLFEIKPQPITCKDIN.

Residues 37-94 (NNNNYNNNNKNNNNNNNNNNNNNNNNNNNNNNNYINSCNSNNNNNNNNNNTKNNNINS) are compositionally biased toward low complexity. Residues 37–99 (NNNNYNNNNK…NNINSRTDKN (63 aa)) form a disordered region.

This is an uncharacterized protein from Dictyostelium discoideum (Social amoeba).